Consider the following 75-residue polypeptide: MPRPKPDDRSDNVEKLQEMVQNTIENIQKAEETMQFASPEEQEKIRAKNRRREEAIAAMRAEIRDEAAAREHGCQ.

Belongs to the Tlp family.

The protein resides in the spore core. The chain is Small, acid-soluble spore protein Tlp from Geobacillus kaustophilus (strain HTA426).